Here is a 498-residue protein sequence, read N- to C-terminus: Probable malate:quinone oxidoreductase 2 (498 aa).

The protein belongs to the MQO family. FAD serves as cofactor.

The catalysed reaction is (S)-malate + a quinone = a quinol + oxaloacetate. The protein operates within carbohydrate metabolism; tricarboxylic acid cycle; oxaloacetate from (S)-malate (quinone route): step 1/1. The chain is Probable malate:quinone oxidoreductase 2 from Staphylococcus aureus (strain MW2).